The primary structure comprises 208 residues: Uracil phosphoribosyltransferase (208 aa).

5-phospho-alpha-D-ribose 1-diphosphate contacts are provided by residues Arg-78, Arg-103, and 130-138 (DPMLATGGS). Uracil is bound by residues Ile-193 and 198–200 (GDA). Asp-199 provides a ligand contact to 5-phospho-alpha-D-ribose 1-diphosphate.

This sequence belongs to the UPRTase family. The cofactor is Mg(2+).

It catalyses the reaction UMP + diphosphate = 5-phospho-alpha-D-ribose 1-diphosphate + uracil. The protein operates within pyrimidine metabolism; UMP biosynthesis via salvage pathway; UMP from uracil: step 1/1. Its activity is regulated as follows. Allosterically activated by GTP. In terms of biological role, catalyzes the conversion of uracil and 5-phospho-alpha-D-ribose 1-diphosphate (PRPP) to UMP and diphosphate. The polypeptide is Uracil phosphoribosyltransferase (Shewanella amazonensis (strain ATCC BAA-1098 / SB2B)).